Here is a 260-residue protein sequence, read N- to C-terminus: Hemin import ATP-binding protein HmuV (260 aa).

The ABC transporter domain maps to 7–243; sequence IQASNISVTF…ERIEQVYGYS (237 aa). Residue 39–46 coordinates ATP; the sequence is GPNGAGKS.

The protein belongs to the ABC transporter superfamily. Heme (hemin) importer (TC 3.A.1.14.5) family. As to quaternary structure, the complex is composed of two ATP-binding proteins (HmuV), two transmembrane proteins (HmuU) and a solute-binding protein (HmuT).

It localises to the cell inner membrane. Functionally, part of the ABC transporter complex HmuTUV involved in hemin import. Responsible for energy coupling to the transport system. The chain is Hemin import ATP-binding protein HmuV from Vibrio anguillarum (strain ATCC 68554 / 775) (Listonella anguillarum).